The chain runs to 536 residues: Phosphoenolpyruvate carboxykinase (ATP) (536 aa).

Arg-61, Tyr-195, and Lys-201 together coordinate substrate. Residues Lys-201, His-220, and 236–244 each bind ATP; that span reads GLSGTGKTT. Mn(2+)-binding residues include Lys-201 and His-220. A Mn(2+)-binding site is contributed by Asp-257. ATP is bound by residues Glu-285, Arg-322, and Thr-447. Arg-322 contributes to the substrate binding site.

This sequence belongs to the phosphoenolpyruvate carboxykinase (ATP) family. Requires Mn(2+) as cofactor.

It localises to the cytoplasm. The catalysed reaction is oxaloacetate + ATP = phosphoenolpyruvate + ADP + CO2. It participates in carbohydrate biosynthesis; gluconeogenesis. Functionally, involved in the gluconeogenesis. Catalyzes the conversion of oxaloacetate (OAA) to phosphoenolpyruvate (PEP) through direct phosphoryl transfer between the nucleoside triphosphate and OAA. The chain is Phosphoenolpyruvate carboxykinase (ATP) from Rhizobium rhizogenes (strain K84 / ATCC BAA-868) (Agrobacterium radiobacter).